We begin with the raw amino-acid sequence, 242 residues long: Response regulator GtcR (242 aa).

The Response regulatory domain maps to 4 to 117 (TILIADDEPE…EAVARIQAQL (114 aa)). Asp53 is subject to 4-aspartylphosphate. Positions 133 to 233 (TQSTTVGRLT…VRGLGYKFAS (101 aa)) form a DNA-binding region, ompR/PhoB-type.

Post-translationally, phosphorylated by GtcS.

In terms of biological role, member of the two-component regulatory system GtcS/GtcR which may act in the control of the transcription of the grs operon which encodes the multienzymes involved in the biosynthesis of the peptide antibiotic gramicidin S. This Aneurinibacillus migulanus (Bacillus migulanus) protein is Response regulator GtcR (gtcR).